The primary structure comprises 210 residues: Proline-rich protein 20G (210 aa).

The segment covering 1–11 (MEEPRHSKRPR) has biased composition (basic residues). The segment at 1-82 (MEEPRHSKRP…GGSWRAGRGR (82 aa)) is disordered. Residues 69–82 (GQRGGGSWRAGRGR) are compositionally biased toward gly residues.

This sequence belongs to the PRR20 family.

This Homo sapiens (Human) protein is Proline-rich protein 20G.